We begin with the raw amino-acid sequence, 419 residues long: Creatine kinase S-type, mitochondrial (419 aa).

The N-terminal 39 residues, methionine 1–alanine 39, are a transit peptide targeting the mitochondrion. The tract at residues alanine 40 to methionine 64 is cardiolipin-binding. The region spanning lysine 46–asparagine 132 is the Phosphagen kinase N-terminal domain. Residues tyrosine 159–leucine 401 form the Phosphagen kinase C-terminal domain. ATP contacts are provided by residues serine 162–arginine 166 and histidine 225. Tyrosine 255 carries the phosphotyrosine modification. Residues arginine 270, arginine 326, arginine 354–valine 359, and aspartate 369 each bind ATP. The residue at position 356 (threonine 356) is a Phosphothreonine.

The protein belongs to the ATP:guanido phosphotransferase family. Exists as an octamer composed of four CKMT2 homodimers.

It localises to the mitochondrion inner membrane. The enzyme catalyses creatine + ATP = N-phosphocreatine + ADP + H(+). Its function is as follows. Reversibly catalyzes the transfer of phosphate between ATP and various phosphogens (e.g. creatine phosphate). Creatine kinase isoenzymes play a central role in energy transduction in tissues with large, fluctuating energy demands, such as skeletal muscle, heart, brain and spermatozoa. This chain is Creatine kinase S-type, mitochondrial (CKMT2), found in Bos taurus (Bovine).